We begin with the raw amino-acid sequence, 129 residues long: Histone H3 (129 aa).

Residues 1-36 (MSRTKETARAKRTITSKKSKKAPSGASGVKRSHRRW) are disordered. A compositionally biased stretch (basic residues) spans 10-21 (AKRTITSKKSKK).

It belongs to the histone H3 family. The nucleosome is a histone octamer containing two molecules each of H2A, H2B, H3 and H4 assembled in one H3-H4 heterotetramer and two H2A-H2B heterodimers. The octamer wraps approximately 147 bp of DNA.

The protein localises to the nucleus. The protein resides in the chromosome. Functionally, core component of nucleosome. Nucleosomes wrap and compact DNA into chromatin, limiting DNA accessibility to the cellular machineries which require DNA as a template. Histones thereby play a central role in transcription regulation, DNA repair, DNA replication and chromosomal stability. DNA accessibility is regulated via a complex set of post-translational modifications of histones, also called histone code, and nucleosome remodeling. The protein is Histone H3 of Leishmania infantum.